Consider the following 393-residue polypeptide: Methylthioribose kinase (393 aa).

Residues asparagine 38, lysine 53, and 107–109 contribute to the ATP site; that span reads EDL. Aspartate 225 contacts substrate. 242–244 lines the ATP pocket; it reads DPE. Arginine 332 is a substrate binding site.

The protein belongs to the methylthioribose kinase family. As to quaternary structure, homodimer.

It catalyses the reaction 5-(methylsulfanyl)-D-ribose + ATP = 5-(methylsulfanyl)-alpha-D-ribose 1-phosphate + ADP + H(+). It functions in the pathway amino-acid biosynthesis; L-methionine biosynthesis via salvage pathway; S-methyl-5-thio-alpha-D-ribose 1-phosphate from S-methyl-5'-thioadenosine (hydrolase route): step 2/2. In terms of biological role, catalyzes the phosphorylation of methylthioribose into methylthioribose-1-phosphate. The protein is Methylthioribose kinase of Bacillus cereus (strain G9842).